The sequence spans 243 residues: Sec-independent protein translocase protein TATB, chloroplastic (243 aa).

A chloroplast-targeting transit peptide spans 1–67 (MTPTANLLLP…SRTRRRNVIC (67 aa)). At 68 to 69 (AS) the chain is on the lumenal side. A helical membrane pass occupies residues 70-90 (LFGVGAPEALVIGVVALLVFG). Residues 91–243 (PKGLAEVARN…NKSQKAEGER (153 aa)) lie on the Stromal side of the membrane. Disordered regions lie at residues 129 to 165 (EIGI…PAPY) and 178 to 243 (IAAS…EGER). Polar residues-rich tracts occupy residues 135-152 (VSQS…NQQP) and 187-204 (NPQQ…PTTP).

This sequence belongs to the TatB family. As to quaternary structure, in thylakoid membranes, TATC and TATB form a large receptor complex, containing about eight TATC-TATB pairs, which binds the precursor protein. Twin arginine signal peptide promotes pH-triggered docking of TATA oligomers to TATC-TATB receptor complex, inducing a conformational switch of TATA that results in activation of the translocase. TATA dissociates from TATC-TATB upon completion of translocation.

It localises to the plastid. The protein localises to the chloroplast thylakoid membrane. Functionally, part of the twin-arginine translocation (Tat) system that transports large folded proteins containing a characteristic twin-arginine motif in their signal peptide across the thylakoid membrane. Involved in delta pH-dependent protein transport required for chloroplast development, especially thylakoid membrane formation. TATC and TATB mediate precursor recognition, whereas TATA facilitates translocation. The polypeptide is Sec-independent protein translocase protein TATB, chloroplastic (Zea mays (Maize)).